We begin with the raw amino-acid sequence, 138 residues long: Small ribosomal subunit protein bS6 (138 aa).

The tract at residues 94–138 is disordered; it reads VKQDGPLPTPKPTSKENEPEKEEVKPTEEKTESPSKDEKKEDSKE. A compositionally biased stretch (basic and acidic residues) spans 106–138; sequence TSKENEPEKEEVKPTEEKTESPSKDEKKEDSKE.

Belongs to the bacterial ribosomal protein bS6 family.

Binds together with bS18 to 16S ribosomal RNA. This is Small ribosomal subunit protein bS6 from Prochlorococcus marinus (strain NATL2A).